A 202-amino-acid polypeptide reads, in one-letter code: LexA repressor (202 aa).

A DNA-binding region (H-T-H motif) is located at residues 28–48 (RAEIAQRLGFRSPNAAEEHLK). Active-site for autocatalytic cleavage activity residues include Ser119 and Lys156.

Belongs to the peptidase S24 family. As to quaternary structure, homodimer.

The enzyme catalyses Hydrolysis of Ala-|-Gly bond in repressor LexA.. Functionally, represses a number of genes involved in the response to DNA damage (SOS response), including recA and lexA. Binds to the 16 bp palindromic sequence 5'-CTGTATATATATACAG-3'. In the presence of single-stranded DNA, RecA interacts with LexA causing an autocatalytic cleavage which disrupts the DNA-binding part of LexA, leading to derepression of the SOS regulon and eventually DNA repair. This is LexA repressor from Edwardsiella ictaluri (strain 93-146).